Reading from the N-terminus, the 1868-residue chain is Dedicator of cytokinesis protein 5 (1868 aa).

The SH3 domain maps to 8–69; the sequence is KRQKYGVAIY…PETYIHLKEA (62 aa). The residue at position 365 (serine 365) is a Phosphoserine. A C2 DOCK-type domain is found at 443–627; sequence RNDIYVTLIH…DSFQIATLIC (185 aa). Lysine 818 is modified (N6-acetyllysine). In terms of domain architecture, DOCKER spans 1231-1642; it reads YKDKKREDIY…VEKLYGVITL (412 aa). Residues 1681 to 1692 are compositionally biased toward low complexity; sequence STSSNSSDNASS. Disordered regions lie at residues 1681-1730 and 1742-1868; these read STSS…RISK and QVIA…PGSQ. Basic and acidic residues predominate over residues 1704-1728; the sequence is LFERRASSGARVEDLPPKEDSENRI. A phosphoserine mark is found at serine 1755, serine 1765, serine 1771, serine 1784, and serine 1788. At threonine 1793 the chain carries Phosphothreonine. Residues 1796 to 1810 are compositionally biased toward polar residues; the sequence is ATRTLSSPSLQTDGL. Phosphoserine is present on residues serine 1832 and serine 1867.

This sequence belongs to the DOCK family. Interacts with CRK and CRKL. Interacts (via N-terminus) with tensin TNS3 (via N-terminus); the interaction increases DOCK5 guanine nucleotide exchange activity towards Rac. Interacts with ELMO1. As to expression, highly expressed in lens, where it predominantly localizes to anterior epithelial cells, and is weakly expressed in lens fiber (at protein level). Expressed in brain, eye, lung, spleen and kidney, but not in thymus or peripheral blood leukocytes.

It is found in the cytoplasm. It localises to the cell membrane. Its subcellular location is the cell projection. The protein localises to the podosome. Functionally, guanine nucleotide exchange factor (GEF) for Rho and Rac. GEF proteins activate small GTPases by exchanging bound GDP for free GTP. Along with DOCK1, mediates CRK/CRKL regulation of epithelial and endothelial cell spreading and migration on type IV collagen. This is Dedicator of cytokinesis protein 5 from Mus musculus (Mouse).